Here is a 255-residue protein sequence, read N- to C-terminus: DNA polymerase epsilon subunit C (255 aa).

Residues 109-255 (KTSSGLHKLS…DEDEASADDG (147 aa)) are disordered. Residues 135–156 (MEEDIPEEDLQEDDEMDVDETE) are compositionally biased toward acidic residues. The span at 171–184 (KASASAKSILSAFK) shows a compositional bias: low complexity. Composition is skewed to acidic residues over residues 199–219 (TEEDEGDEKEEDEDEEEEIDP) and 236–255 (DLDEESEVSSDEDEASADDG).

In terms of assembly, heterotetramer. Consists of four subunits: POL2, DPB2, DPB3 and DPB4.

The protein localises to the nucleus. Functionally, as accessory component of the DNA polymerase epsilon (DNA polymerase II) participates in chromosomal DNA replication. This Candida glabrata (strain ATCC 2001 / BCRC 20586 / JCM 3761 / NBRC 0622 / NRRL Y-65 / CBS 138) (Yeast) protein is DNA polymerase epsilon subunit C (DPB3).